We begin with the raw amino-acid sequence, 697 residues long: Sialidase B (697 aa).

An N-terminal signal peptide occupies residues 1–29 (MNKRGLYSKLGISVVGISLLMGVPTLIHA). Position 245 (Arg-245) interacts with substrate. Asp-270 serves as the catalytic Proton acceptor. BNR repeat units lie at residues 280–291 (SYSDDNGKTWSE), 462–473 (TTSQNRGESWEQ), and 517–528 (LISDDSGQTWKK). Residue Glu-541 is part of the active site. Arg-557 provides a ligand contact to substrate. The BNR 4 repeat unit spans residues 566–577 (MTSRDSGETWSK). Arg-619 lines the substrate pocket. The active-site Nucleophile is Tyr-653.

The protein belongs to the glycosyl hydrolase 33 family.

The enzyme catalyses Hydrolysis of alpha-(2-&gt;3)-, alpha-(2-&gt;6)-, alpha-(2-&gt;8)- glycosidic linkages of terminal sialic acid residues in oligosaccharides, glycoproteins, glycolipids, colominic acid and synthetic substrates.. This is Sialidase B (nanB) from Streptococcus pneumoniae serotype 4 (strain ATCC BAA-334 / TIGR4).